A 179-amino-acid chain; its full sequence is Large ribosomal subunit protein uL5 (179 aa).

The protein belongs to the universal ribosomal protein uL5 family. Part of the 50S ribosomal subunit; part of the 5S rRNA/L5/L18/L25 subcomplex. Contacts the 5S rRNA and the P site tRNA. Forms a bridge to the 30S subunit in the 70S ribosome.

Its function is as follows. This is one of the proteins that bind and probably mediate the attachment of the 5S RNA into the large ribosomal subunit, where it forms part of the central protuberance. In the 70S ribosome it contacts protein S13 of the 30S subunit (bridge B1b), connecting the 2 subunits; this bridge is implicated in subunit movement. Contacts the P site tRNA; the 5S rRNA and some of its associated proteins might help stabilize positioning of ribosome-bound tRNAs. The sequence is that of Large ribosomal subunit protein uL5 from Parasynechococcus marenigrum (strain WH8102).